Reading from the N-terminus, the 69-residue chain is Protein SlyX homolog (69 aa).

It belongs to the SlyX family.

The polypeptide is Protein SlyX homolog (Pseudomonas paraeruginosa (strain DSM 24068 / PA7) (Pseudomonas aeruginosa (strain PA7))).